Reading from the N-terminus, the 356-residue chain is GDP-mannose:di-myo-inositol-1,3'-phosphate beta-1,2-mannosyltransferase (356 aa).

The protein belongs to the MDIP synthase family. Requires Mg(2+) as cofactor.

It carries out the reaction bis(myo-inositol) 1,3'-phosphate + GDP-alpha-D-mannose = 2-O-(beta-D-mannosyl)-bis(myo-inositol) 1,3'-phosphate + GDP + H(+). The catalysed reaction is 2-O-(beta-D-mannosyl)-bis(myo-inositol) 1,3'-phosphate + GDP-alpha-D-mannose = 2-O-(beta-D-mannosyl-(1-&gt;2)-beta-D-mannosyl)-bis(myo-inositol) 1,3'-phosphate + GDP + H(+). The enzyme catalyses bis(myo-inositol) 1,3'-phosphate + 2 GDP-alpha-D-mannose = 2-O-(beta-D-mannosyl-(1-&gt;2)-beta-D-mannosyl)-bis(myo-inositol) 1,3'-phosphate + 2 GDP + 2 H(+). Catalyzes the transfer of the mannosyl group from GDP-mannose to di-myo-inositol-1,3'-phosphate (DIP), producing mannosyl-di-myo-inositol phosphate (MDIP). Can also use MDIP as an acceptor of a second mannose residue, yielding di-mannosyl-di-myo-inositol phosphate (MMDIP). This Aquifex aeolicus (strain VF5) protein is GDP-mannose:di-myo-inositol-1,3'-phosphate beta-1,2-mannosyltransferase.